The sequence spans 1303 residues: Alpha,alpha-trehalose-phosphate synthase [UDP-forming] 2 (1303 aa).

Disordered stretches follow at residues 1–48 and 205–251; these read MTVV…NNTT and LQRR…FRGK. A compositionally biased stretch (low complexity) spans 212–221; that stretch reads SSRGGSLRGS.

In the N-terminal section; belongs to the glycosyltransferase 20 family. This sequence in the C-terminal section; belongs to the gob-1 trehalose phosphatase family.

It catalyses the reaction D-glucose 6-phosphate + UDP-alpha-D-glucose = alpha,alpha-trehalose 6-phosphate + UDP + H(+). Functionally, catalyzes the production of trehalose from glucose-6-phosphate and UDP-alpha-D-glucose in a 2 step process. In Aphelenchoides avenae (Mycophagous nematode worm), this protein is Alpha,alpha-trehalose-phosphate synthase [UDP-forming] 2 (tps-2).